The following is a 296-amino-acid chain: Cytidine deaminase (296 aa).

2 CMP/dCMP-type deaminase domains span residues Glu-47–Ser-167 and Asp-186–Glu-296. Asn-88 to Glu-90 lines the substrate pocket. Residue His-101 participates in Zn(2+) binding. Glu-103 acts as the Proton donor in catalysis. Cys-128 and Cys-131 together coordinate Zn(2+).

Belongs to the cytidine and deoxycytidylate deaminase family. Homodimer. It depends on Zn(2+) as a cofactor.

The enzyme catalyses cytidine + H2O + H(+) = uridine + NH4(+). It catalyses the reaction 2'-deoxycytidine + H2O + H(+) = 2'-deoxyuridine + NH4(+). This enzyme scavenges exogenous and endogenous cytidine and 2'-deoxycytidine for UMP synthesis. This chain is Cytidine deaminase, found in Shewanella halifaxensis (strain HAW-EB4).